Reading from the N-terminus, the 673-residue chain is UvrABC system protein B (673 aa).

A Helicase ATP-binding domain is found at 26–414 (ANFEAGLAKQ…AGEVTELVVR (389 aa)). 39-46 (GVTGSGKT) contributes to the ATP binding site. The short motif at 92 to 115 (YYDYYQPEAYVPSSDTFIEKDSSI) is the Beta-hairpin element. In terms of domain architecture, Helicase C-terminal spans 431-597 (QVDDLMSEVH…SVERPIADIM (167 aa)). Composition is skewed to basic and acidic residues over residues 600–609 (ARDDAAEKKS) and 618–628 (HVAEETPDYRA). The disordered stretch occupies residues 600 to 628 (ARDDAAEKKSGKGRSKSRHVAEETPDYRA). Residues 635–670 (AGKLKSLEQKMYQHAKDLEFEAAAQIRDQIQKLKAA) form the UVR domain.

Belongs to the UvrB family. Forms a heterotetramer with UvrA during the search for lesions. Interacts with UvrC in an incision complex.

Its subcellular location is the cytoplasm. Its function is as follows. The UvrABC repair system catalyzes the recognition and processing of DNA lesions. A damage recognition complex composed of 2 UvrA and 2 UvrB subunits scans DNA for abnormalities. Upon binding of the UvrA(2)B(2) complex to a putative damaged site, the DNA wraps around one UvrB monomer. DNA wrap is dependent on ATP binding by UvrB and probably causes local melting of the DNA helix, facilitating insertion of UvrB beta-hairpin between the DNA strands. Then UvrB probes one DNA strand for the presence of a lesion. If a lesion is found the UvrA subunits dissociate and the UvrB-DNA preincision complex is formed. This complex is subsequently bound by UvrC and the second UvrB is released. If no lesion is found, the DNA wraps around the other UvrB subunit that will check the other stand for damage. This Xanthomonas axonopodis pv. citri (strain 306) protein is UvrABC system protein B.